A 252-amino-acid chain; its full sequence is Small ribosomal subunit protein uS2 (252 aa).

The residue at position 2 (Ser2) is an N-acetylserine. Residues 213-222 (QVAEETAGAA) show a composition bias toward low complexity. Positions 213–252 (QVAEETAGAATEEEEAKEEVTEEQTEATEWAEETTEAVAW) are disordered. A compositionally biased stretch (acidic residues) spans 223–252 (TEEEEAKEEVTEEQTEATEWAEETTEAVAW).

It belongs to the universal ribosomal protein uS2 family. As to quaternary structure, component of the small ribosomal subunit. Mature ribosomes consist of a small (40S) and a large (60S) subunit. The 40S subunit contains about 33 different proteins and 1 molecule of RNA (18S). The 60S subunit contains about 49 different proteins and 3 molecules of RNA (25S, 5.8S and 5S). Interacts with RPS21.

The protein localises to the cytoplasm. Its function is as follows. Required for the assembly and/or stability of the 40S ribosomal subunit. Required for the processing of the 20S rRNA-precursor to mature 18S rRNA in a late step of the maturation of 40S ribosomal subunits. In Zygosaccharomyces rouxii (strain ATCC 2623 / CBS 732 / NBRC 1130 / NCYC 568 / NRRL Y-229), this protein is Small ribosomal subunit protein uS2.